A 489-amino-acid chain; its full sequence is CUGBP Elav-like family member 1-B (489 aa).

RRM domains lie at 16 to 99 (IKMF…PADS), 108 to 188 (RKLF…FADT), and 404 to 482 (ANLF…LKRS).

This sequence belongs to the CELF/BRUNOL family. Oligomer. Oligomerization is required for RNA-binding and EDEN-dependent deadenylation. Post-translationally, phosphorylated during oocyte maturation and dephosphorylated following egg activation. Dephosphorylation is calcium dependent and correlates with the increase in the activity of EDEN-dependent deadenylation.

Its subcellular location is the nucleus. The protein resides in the cytoplasm. Functionally, RNA-binding protein implicated in the regulation of several post-transcriptional events. May be involved in pre-mRNA alternative splicing, mRNA translation activation and stability. Mediates the rapid and sequence-specific cytoplasmic deadenylation of EDEN-containing maternal mRNAs following fertilization. Binds to AU-rich sequences (AREs) of jun mRNA. Binds to the embryonic deadenylation element (EDEN) motif localized in the 3'-UTR of maternal mRNAs. Binds to RNA containing several repeats of the consensus sequence 5'-UGU-3'. EDEN-dependent deadenylation is enhanced by the presence of an additional cis element composed of three AUU repeats. This Xenopus laevis (African clawed frog) protein is CUGBP Elav-like family member 1-B (cugbp1-b).